The primary structure comprises 375 residues: Phytanoyl-CoA hydroxylase-interacting protein-like (375 aa).

S11, S12, and S15 each carry phosphoserine. N22 carries an N-linked (GlcNAc...) asparagine glycan. S24 carries the post-translational modification Phosphoserine. N36 is a glycosylation site (N-linked (GlcNAc...) asparagine). One can recognise a Fibronectin type-III domain in the interval 51-160 (VPHNIKINNI…EIIEFCTADY (110 aa)).

The protein belongs to the PHYHIP family.

In terms of biological role, may play a role in the development of the central system. This chain is Phytanoyl-CoA hydroxylase-interacting protein-like (Phyhipl), found in Rattus norvegicus (Rat).